Consider the following 137-residue polypeptide: Nucleoside diphosphate kinase (137 aa).

6 residues coordinate ATP: Lys-10, Phe-58, Arg-86, Thr-92, Arg-103, and Asn-113. Catalysis depends on His-116, which acts as the Pros-phosphohistidine intermediate.

The protein belongs to the NDK family. In terms of assembly, homotetramer. The cofactor is Mg(2+).

The protein localises to the cytoplasm. The enzyme catalyses a 2'-deoxyribonucleoside 5'-diphosphate + ATP = a 2'-deoxyribonucleoside 5'-triphosphate + ADP. It catalyses the reaction a ribonucleoside 5'-diphosphate + ATP = a ribonucleoside 5'-triphosphate + ADP. Its function is as follows. Major role in the synthesis of nucleoside triphosphates other than ATP. The ATP gamma phosphate is transferred to the NDP beta phosphate via a ping-pong mechanism, using a phosphorylated active-site intermediate. The chain is Nucleoside diphosphate kinase from Helicobacter pylori (strain P12).